Reading from the N-terminus, the 699-residue chain is Telomere elongation protein EST1 (699 aa).

Positions 641–663 (KKLSPLPEKDGVSSELVKHAASR) are disordered. Basic and acidic residues predominate over residues 647–658 (PEKDGVSSELVK).

Belongs to the EST1 family. Interacts with CDC13 and MPS3.

The protein resides in the nucleus. It localises to the chromosome. The protein localises to the telomere. Its function is as follows. Directly involved in telomere replication. Associates with telomerase and during its interaction with CDC13, telomerase activity is promoted. The sequence is that of Telomere elongation protein EST1 (EST1) from Saccharomyces cerevisiae (strain ATCC 204508 / S288c) (Baker's yeast).